The primary structure comprises 289 residues: Splicing factor C9orf78 homolog (289 aa).

Basic residues predominate over residues 1-12 (MPVVRKIFRRRR). 2 disordered regions span residues 1–27 (MPVVRKIFRRRRGDSESEEDEQDSEEV) and 86–109 (GKDKISEEEDLHLGTSFSAETNRR). Residues 5–58 (RKIFRRRRGDSESEEDEQDSEEVRLKLEETREVQNLRKRPNGVSAVALLVGEKV) are interaction with SNRNP200. Ser-15 and Ser-17 each carry phosphoserine. Tyr-147 bears the Phosphotyrosine mark. Positions 232 to 283 (LNAPIRRNKEEPKARPLRVGDTEKPEPERSPPNRKRPANEKATDDYHYEKFK) are enriched in basic and acidic residues. A disordered region spans residues 232–289 (LNAPIRRNKEEPKARPLRVGDTEKPEPERSPPNRKRPANEKATDDYHYEKFKKMNRRY). At Thr-253 the chain carries Phosphothreonine. The residue at position 261 (Ser-261) is a Phosphoserine.

Belongs to the TLS1 family. As to quaternary structure, component of the spliceosome. Interacts with SNRNP200; the interaction is direct. Interacts with PRPF8.

It is found in the nucleus. Its subcellular location is the chromosome. The protein localises to the centromere. Its function is as follows. Plays a role in pre-mRNA splicing by promoting usage of the upstream 3'-splice site at alternative NAGNAG splice sites; these are sites featuring alternative acceptor motifs separated by only a few nucleotides. May also modulate exon inclusion events. Plays a role in spliceosomal remodeling by displacing WBP4 from SNRNP200 and may act to inhibit SNRNP200 helicase activity. Binds U5 snRNA. Required for proper chromosome segregation. Not required for splicing of shelterin components. The sequence is that of Splicing factor C9orf78 homolog from Pongo abelii (Sumatran orangutan).